An 883-amino-acid chain; its full sequence is Valine--tRNA ligase (883 aa).

Positions 46-56 (PNVTGKLHLGH) match the 'HIGH' region motif. The 'KMSKS' region signature appears at 520–524 (KMSKS). K523 is a binding site for ATP. Residues 809–883 (LADLLNVEEE…RIKEMEKLIK (75 aa)) adopt a coiled-coil conformation.

The protein belongs to the class-I aminoacyl-tRNA synthetase family. ValS type 1 subfamily. As to quaternary structure, monomer.

Its subcellular location is the cytoplasm. The catalysed reaction is tRNA(Val) + L-valine + ATP = L-valyl-tRNA(Val) + AMP + diphosphate. Functionally, catalyzes the attachment of valine to tRNA(Val). As ValRS can inadvertently accommodate and process structurally similar amino acids such as threonine, to avoid such errors, it has a 'posttransfer' editing activity that hydrolyzes mischarged Thr-tRNA(Val) in a tRNA-dependent manner. The sequence is that of Valine--tRNA ligase from Streptococcus mutans serotype c (strain ATCC 700610 / UA159).